The sequence spans 256 residues: Hypodermin-A (256 aa).

An N-terminal signal peptide occupies residues 1–22; that stretch reads MLKFVILLCSIAYVFGAVVPLG. A propeptide spans 23–30 (activation peptide); it reads MLSQSDGR. In terms of domain architecture, Peptidase S1 spans 31-254; it reads IVGGVESKIE…VRSLIVSNAE (224 aa). Cysteine 56 and cysteine 72 are joined by a disulfide. Active-site charge relay system residues include histidine 71 and aspartate 116. 2 disulfide bridges follow: cysteine 180–cysteine 197 and cysteine 206–cysteine 230. The active-site Charge relay system is serine 210.

The protein belongs to the peptidase S1 family.

It is found in the secreted. In terms of biological role, specificity, limited to carboxyl side of arginine residue in B-chain of insulin. The protein is Hypodermin-A of Hypoderma lineatum (Early cattle grub).